We begin with the raw amino-acid sequence, 260 residues long: MLDIGVNLTNGQFSGDVPQVVARARQAGLNGMIITGTNLTESAQALHLAQAYPDFCWATAGVHPHDAHRWNENSAADLEPLLRSPAVVAVGECGLDFARNFSTPAQQEAAFEAQLALAAQIGKPVFLHCREAHARFIALLRPWLSRLPGAVLHCFTGTRDELDACLSLGLYIGITGWICDERRGMPLRALLPHIPAERLLLETDAPYLLPRDIQPKPKSRRNEPCFLPHIAEQAARWRQQDANWLKQVTENNARQLFRLA.

A divalent metal cation is bound by residues Glu-92, His-128, and His-153.

The protein belongs to the metallo-dependent hydrolases superfamily. TatD-type hydrolase family. TatD subfamily. In terms of assembly, monomer. Mg(2+) is required as a cofactor.

The protein localises to the cytoplasm. Its function is as follows. 3'-5' exonuclease that prefers single-stranded DNA and RNA. May play a role in the H(2)O(2)-induced DNA damage repair. In Edwardsiella piscicida, this protein is 3'-5' ssDNA/RNA exonuclease TatD.